Consider the following 627-residue polypeptide: Neutral endopeptidase (627 aa).

The Peptidase M13 domain maps to 1–627 (MTRIQDDLFA…RAPENRLKIW (627 aa)). A Zn(2+)-binding site is contributed by His-475. The active site involves Glu-476. The Zn(2+) site is built by His-479 and Glu-535. Asp-539 (proton donor) is an active-site residue.

The protein belongs to the peptidase M13 family. As to quaternary structure, monomer. Zn(2+) is required as a cofactor.

It localises to the cytoplasm. In terms of biological role, endopeptidase with broad substrate specificity for several oligopeptides. This chain is Neutral endopeptidase (pepO), found in Lactococcus lactis subsp. cremoris (Streptococcus cremoris).